The sequence spans 348 residues: Xaa-Pro dipeptidase (348 aa).

Co(2+) is bound by residues Asp-209, Asp-220, His-284, Glu-313, and Glu-327.

It belongs to the peptidase M24B family. Archaeal-type prolidase subfamily. Homodimer. Co(2+) serves as cofactor. The cofactor is Mn(2+).

The protein resides in the cytoplasm. It carries out the reaction Xaa-L-Pro dipeptide + H2O = an L-alpha-amino acid + L-proline. Splits dipeptides with a prolyl in the C-terminal position and a nonpolar amino acid at the N-terminal position. In Pyrococcus furiosus (strain ATCC 43587 / DSM 3638 / JCM 8422 / Vc1), this protein is Xaa-Pro dipeptidase (pepQ).